Consider the following 517-residue polypeptide: Protein NETWORKED 4B (517 aa).

Disordered regions lie at residues 1–29 (MASSTAQSKKQFKRSMTKKSHSWWWDSHN) and 101–159 (LQKN…EDGD). Basic residues predominate over residues 10-21 (KQFKRSMTKKSH). Residues 21–101 (HSWWWDSHNC…ERYDQASGEL (81 aa)) enclose the NAB domain. The span at 107–119 (SEIQSQSSLEISS) shows a compositional bias: low complexity. Positions 121–135 (TKEKLSRRQSSHKEE) are enriched in basic and acidic residues. A coiled-coil region spans residues 156-486 (EDGDEALIRR…EQKREAIRQL (331 aa)).

The protein belongs to the NET family.

Functionally, plant-specific actin binding protein. May be part of a membrane-cytoskeletal adapter complex. This is Protein NETWORKED 4B from Arabidopsis thaliana (Mouse-ear cress).